The sequence spans 958 residues: Atromentin synthetase greA (958 aa).

The interval 60–465 (SIQTKTFSAF…SGRIKDTVIV (406 aa)) is adenylation (A) domain. Residues 597 to 675 (APSTETEKAL…SLANYVNALL (79 aa)) enclose the Carrier domain. The interval 602–672 (TEKALAKIYA…VVSSLANYVN (71 aa)) is thiolation and peptide carrier (T) domain. Serine 634 carries the post-translational modification O-(pantetheine 4'-phosphoryl)serine. Positions 698 to 946 (PIFFVHPGVG…MDFDHVPQFQ (249 aa)) are thioesterase (TE) domain.

Belongs to the ATP-dependent AMP-binding enzyme family.

It functions in the pathway secondary metabolite biosynthesis. Functionally, an L-tyrosine:2-oxoglutarate aminotransferase and atromentin synthetase greA catalyze consecutive steps to turn over L-tyrosine into atromentin, which represents the generic precursor molecule for the entire terphenylquinone and pulvinic acid family of pigments, which are widely distributed secondary metabolites in homobasidiomycetes. The first step catalyzed by the aminotransferase converts L-tyrosine in to 4-hydroxyphenylpyruvate (4-HPP). Adenylation of two 4-HPP monomers by the greA adenylation (A) domain, covalent tethering of the monomers as a thioester and oxoester onto the greA thiolation (T) and thioesterase (TE) domains, respectively, and symmetric C-C-bond formation between two monomers catalyzed by the greA TE domain leads to atromentin. In Suillus grevillei (Larch bolete), this protein is Atromentin synthetase greA (greA).